Reading from the N-terminus, the 542-residue chain is Sensory neuron membrane protein 2 (542 aa).

Over 1–487 the chain is Extracellular; it reads MMVMNTELRQ…MKVLTLLDIV (487 aa). N-linked (GlcNAc...) asparagine glycans are attached at residues N33, N128, N238, and N274. 3 disulfides stabilise this stretch: C283/C351, C312/C378, and C353/C367. A helical membrane pass occupies residues 488–508; the sequence is QWVMIGSGLLLAIIMPIVYFI. The Cytoplasmic segment spans residues 509 to 542; the sequence is KRRPSSGSITPTLTTTTSTVSISDGGGLGGNPQK.

It belongs to the CD36 family. As to expression, detected in the antenna, legs and wings. Higher levels of expression detected in male compared to female.

Its subcellular location is the cell membrane. Plays an olfactory role that is not restricted to pheromone sensitivity. The polypeptide is Sensory neuron membrane protein 2 (Aedes aegypti (Yellowfever mosquito)).